A 478-amino-acid chain; its full sequence is D(1B) dopamine receptor (478 aa).

The Extracellular segment spans residues 1 to 38 (MLPPGRNGTAHRARLGLQRQLAQVDAPGGSAAPLGPAQ). Residue N7 is glycosylated (N-linked (GlcNAc...) asparagine). A helical membrane pass occupies residues 39–64 (VVTAGLLTLLIVWTLLGNVLVCAAIV). Over 65–75 (RSRHLRAKMTN) the chain is Cytoplasmic. Residues 76–102 (IFIVSLAVSDLFVALLVMPWKAVAEVA) traverse the membrane as a helical segment. At 103–111 (GYWPFGAFC) the chain is on the extracellular side. A disulfide bond links C111 and C211. The helical transmembrane segment at 112–134 (DIWVAFDIMCSTASILNLCIISV) threads the bilayer. Topologically, residues 135–153 (DRYWAISRPFRYERKMTQR) are cytoplasmic. Residues 154–179 (VALVMVALAWTLSILISFIPVQLNWH) form a helical membrane-spanning segment. Over 180 to 215 (RDKAGSQGREGLLSNETPWEEGWELDGRTENCDSSL) the chain is Extracellular. Residues 216 to 240 (NRTYAISSSLISFYIPVAIMIVTYT) form a helical membrane-spanning segment. The Cytoplasmic segment spans residues 241–289 (RIYRIAQVQIRRISSLERAAEHAQSCRSRGACEPDPSLRASIKKETKVF). The chain crosses the membrane as a helical span at residues 290–317 (KTLSVIMGVFVCCWLPFFILNCMVPFCS). At 318-335 (SGDAQGPRTGFPCVSETT) the chain is on the extracellular side. A helical membrane pass occupies residues 336 to 357 (FDIFVWFGWANSSLNPIIYAFN). Residues 358 to 478 (ADFRKVFAQL…LTPNCFHKTA (121 aa)) are Cytoplasmic-facing. C370 carries S-palmitoyl cysteine lipidation. A disordered region spans residues 416–446 (GDREVGEEEEAEEEGPFDHMSQISPTTPDGD). The segment covering 420–430 (VGEEEEAEEEG) has biased composition (acidic residues).

This sequence belongs to the G-protein coupled receptor 1 family.

Its subcellular location is the cell membrane. Its function is as follows. Dopamine receptor whose activity is mediated by G proteins which activate adenylyl cyclase. This is D(1B) dopamine receptor (Drd5) from Mus musculus (Mouse).